The primary structure comprises 883 residues: MSSGANITYASRKRRKPVQKTVKPIPAEGIKSNPSKRHRDRLNTELDRLASLLPFPQDVINKLDKLSVLRLSVSYLRAKSFFDVALKSTPADRNGGQDQCRAQIRDWQDLQEGEFLLQALNGFVLVVTADALVFYASSTIQDYLGFQQSDVIHQSVYELIHTEDRAEFQRQLHWALNPDSAQGVDEAHGPPQAAVYYTPDQLPPENASFMERCFRCRLRCLLDNSSGFLAMNFQGRLKYLHGQNKKGKDGALLPPQLALFAIATPLQPPSILEIRTKNFIFRTKHKLDFTPIGCDAKGQLILGYTEVELCTRGSGYQFIHAADMLHCAESHIRMIKTGESGMTVFRLLAKHSRWRWVQSNARLIYRNGRPDYIIATQRPLTDEEGREHLQKRSTSLPFMFATGEAVLYEISSPFSPIMDPLPIRTKSNTSRKDWAPQSTPSKDSFHPSSLMSALIQQDESIYLCPPSSPAPLDSHFLMGSVSKCGSWQDSFAAAGSEAALKHEQIGHAQDVNLALSGGPSELFPDNKNNDLYNIMRNLGIDFEDIRSMQNEEFFRTDSTAAGEVDFKDIDITDEILTYVQDSLNNSTLMNSACQQQPVTQHLSCMLQERLQLEQQQQLQQPPPQALEPQQQLCQMVCPQQDLGPKHTQINGTFASWNPTPPVSFNCPQQELKHYQLFSSLQGTAQEFPYKPEVDSVPYTQNFAPCNQPLLPEHSKSVQLDFPGRDFEPSLHPTTSNLDFVSCLQVPENQSHGINSQSAMVSPQAYYAGAMSMYQCQPGPQRTPVDQTQYSSEIPGSQAFLSKVQSRGVFNETYSSDLSSIDHAVQTTGHLHHLAEARPLPDISHLVGSCSSHARMKFIQEQDTGTVRVGHQYTFSKTDFDSCI.

A propeptide spanning residues 1 to 9 (MSSGANITY) is cleaved from the precursor. The disordered stretch occupies residues 1-38 (MSSGANITYASRKRRKPVQKTVKPIPAEGIKSNPSKRH). 2 short sequence motifs (nuclear localization signal) span residues 12 to 15 (RKRR) and 36 to 41 (KRHRDR). The region spanning 26 to 79 (PAEGIKSNPSKRHRDRLNTELDRLASLLPFPQDVINKLDKLSVLRLSVSYLRAK) is the bHLH domain. The segment at 37–65 (RHRDRLNTELDRLASLLPFPQDVINKLDK) is DNA-binding. 3 required for maintaining the overall integrity of the AHR:ARNT heterodimer and its transcriptional activity regions span residues 49–81 (LASL…AKSF), 116–124 (LLQALNGFV), and 260–262 (FAI). The Nuclear export signal motif lies at 63–71 (LDKLSVLRL). The PAS 1 domain occupies 111–175 (QEGEFLLQAL…AEFQRQLHWA (65 aa)). Residues 266–336 (LQPPSILEIR…CAESHIRMIK (71 aa)) enclose the PAS 2 domain. A PAC domain is found at 342-383 (MTVFRLLAKHSRWRWVQSNARLIYRNGRPDYIIATQRPLTDE). Positions 421-449 (LPIRTKSNTSRKDWAPQSTPSKDSFHPSS) are disordered. Positions 436–449 (PQSTPSKDSFHPSS) are enriched in polar residues.

In terms of assembly, homodimer. Heterodimer; efficient DNA binding requires dimerization with another bHLH protein. Interacts with ARNT; the heterodimer ARNT:AHR binds to core DNA sequence 5'-TGCGTG-3' within the dioxin response element (DRE) of target gene promoters and activates their transcription. Binds MYBBP1A. Interacts with coactivators including SRC-1, RIP140 and NOCA7, and with the corepressor SMRT. Interacts with NEDD8 and IVNS1ABP. Interacts with BMAL1. Interacts with HSP90AB1. Interacts with TIPARP; leading to mono-ADP-ribosylation of AHR and subsequent inhibition of AHR. In terms of processing, mono-ADP-ribosylated, leading to inhibit transcription activator activity of AHR.

It localises to the cytoplasm. Its subcellular location is the nucleus. Its function is as follows. Ligand-activated transcription factor that enables cells to adapt to changing conditions by sensing compounds from the environment, diet, microbiome and cellular metabolism, and which plays important roles in development, immunity and cancer. Upon ligand binding, translocates into the nucleus, where it heterodimerizes with ARNT and induces transcription by binding to xenobiotic response elements (XRE). Regulates a variety of biological processes, including angiogenesis, hematopoiesis, drug and lipid metabolism, cell motility and immune modulation. Xenobiotics can act as ligands: upon xenobiotic-binding, activates the expression of multiple phase I and II xenobiotic chemical metabolizing enzyme genes (such as the CYP1A1 gene). Mediates biochemical and toxic effects of halogenated aromatic hydrocarbons. Next to xenobiotics, natural ligands derived from plants, microbiota, and endogenous metabolism are potent AHR agonists. Tryptophan (Trp) derivatives constitute an important class of endogenous AHR ligands. Acts as a negative regulator of anti-tumor immunity: indoles and kynurenic acid generated by Trp catabolism act as ligand and activate AHR, thereby promoting AHR-driven cancer cell motility and suppressing adaptive immunity. Regulates the circadian clock by inhibiting the basal and circadian expression of the core circadian component PER1. Inhibits PER1 by repressing the CLOCK-BMAL1 heterodimer mediated transcriptional activation of PER1. The heterodimer ARNT:AHR binds to core DNA sequence 5'-TGCGTG-3' within the dioxin response element (DRE) of target gene promoters and activates their transcription. The polypeptide is Aryl hydrocarbon receptor (Ahr) (Mus musculus molossinus (Japanese house mouse)).